The following is an 887-amino-acid chain: Lateral signaling target protein 2 homolog (887 aa).

A Glycyl lysine isopeptide (Lys-Gly) (interchain with G-Cter in ubiquitin) cross-link involves residue Lys-87. The tract at residues 308 to 327 is disordered; sequence PALSAPLPPEGPLSAKAKDP. At Ser-334 the chain carries Phosphoserine. Disordered regions lie at residues 354 to 396 and 412 to 474; these read DEMS…GSDE and ALAR…ASLA. Phosphothreonine is present on Thr-516. Ser-586 bears the Phosphoserine; by MAP2K mark. The tract at residues 599–714 is disordered; it reads LAKASDRAPE…THAAPQATRE (116 aa). Positions 602 to 612 are enriched in basic and acidic residues; it reads ASDRAPERQEE. Residues 638-648 are compositionally biased toward polar residues; that stretch reads TSGSQVDTASG. Low complexity-rich tracts occupy residues 681–693 and 700–711; these read SGSS…SCSS and AAPAATHAAPQA. The FYVE-type zinc finger occupies 817 to 879; the sequence is DEACGFCTAC…THCYMFHVTP (63 aa). Residues Cys-823, Cys-826, Cys-839, Cys-842, Cys-847, Cys-850, and Cys-869 each coordinate Zn(2+). Position 870 is a phosphothreonine; by MAP2K (Thr-870). Cys-872 contacts Zn(2+).

It belongs to the lst-2 family. Interacts with TRIM3. In terms of processing, monoubiquitination at Lys-87 prevents binding to phosphatidylinositol 3-phosphate (PI3P) and localization to early endosome membranes.

It localises to the cytoplasm. Its subcellular location is the cytosol. The protein resides in the early endosome membrane. Functionally, negative regulator of epidermal growth factor receptor (EGFR) signaling. Acts by promoting EGFR degradation in endosomes when not monoubiquitinated. The chain is Lateral signaling target protein 2 homolog (ZFYVE28) from Homo sapiens (Human).